Here is a 332-residue protein sequence, read N- to C-terminus: Lipoyl synthase (332 aa).

Residues Cys-74, Cys-79, Cys-85, Cys-100, Cys-104, Cys-107, and Ser-314 each coordinate [4Fe-4S] cluster. The Radical SAM core domain maps to 85–303 (CFGKGTATFM…EEKAYEMGFS (219 aa)).

It belongs to the radical SAM superfamily. Lipoyl synthase family. [4Fe-4S] cluster serves as cofactor.

The protein resides in the cytoplasm. It catalyses the reaction [[Fe-S] cluster scaffold protein carrying a second [4Fe-4S](2+) cluster] + N(6)-octanoyl-L-lysyl-[protein] + 2 oxidized [2Fe-2S]-[ferredoxin] + 2 S-adenosyl-L-methionine + 4 H(+) = [[Fe-S] cluster scaffold protein] + N(6)-[(R)-dihydrolipoyl]-L-lysyl-[protein] + 4 Fe(3+) + 2 hydrogen sulfide + 2 5'-deoxyadenosine + 2 L-methionine + 2 reduced [2Fe-2S]-[ferredoxin]. It participates in protein modification; protein lipoylation via endogenous pathway; protein N(6)-(lipoyl)lysine from octanoyl-[acyl-carrier-protein]: step 2/2. Catalyzes the radical-mediated insertion of two sulfur atoms into the C-6 and C-8 positions of the octanoyl moiety bound to the lipoyl domains of lipoate-dependent enzymes, thereby converting the octanoylated domains into lipoylated derivatives. The polypeptide is Lipoyl synthase (Polaromonas naphthalenivorans (strain CJ2)).